Consider the following 160-residue polypeptide: Ribosomal RNA large subunit methyltransferase H (160 aa).

Residues Leu-76, Gly-108, and 127 to 132 (FGRMTF) contribute to the S-adenosyl-L-methionine site.

The protein belongs to the RNA methyltransferase RlmH family. In terms of assembly, homodimer.

It localises to the cytoplasm. The enzyme catalyses pseudouridine(1915) in 23S rRNA + S-adenosyl-L-methionine = N(3)-methylpseudouridine(1915) in 23S rRNA + S-adenosyl-L-homocysteine + H(+). Its function is as follows. Specifically methylates the pseudouridine at position 1915 (m3Psi1915) in 23S rRNA. This chain is Ribosomal RNA large subunit methyltransferase H, found in Methylocella silvestris (strain DSM 15510 / CIP 108128 / LMG 27833 / NCIMB 13906 / BL2).